The following is a 3011-amino-acid chain: Chromodomain-helicase-DNA-binding protein 7 (3011 aa).

Disordered stretches follow at residues 90 to 146 (ISNA…SMWG), 159 to 189 (PYQQ…QHMQ), 202 to 422 (MQQH…GSAG), 502 to 806 (QQLP…VEKI), and 941 to 960 (PEME…SESS). The span at 159 to 168 (PYQQQQQQPQ) shows a compositional bias: low complexity. Residues 169 to 179 (PTQPPQAPSGP) are compositionally biased toward pro residues. Residues 203–215 (QQHGQPQQQRMNQ) are compositionally biased toward low complexity. Composition is skewed to polar residues over residues 216–227 (FSQGQEGLNQGN), 241–258 (VPQQ…SVQQ), 291–347 (QTLN…NQSV), and 374–393 (GSLN…QGTY). Residues 502 to 516 (QQLPSQQQSFQQQMP) show a composition bias toward low complexity. 2 stretches are compositionally biased toward polar residues: residues 576 to 586 (TQVSGPNTQLV) and 630 to 641 (DSQNLSRNSVDC). Basic and acidic residues-rich tracts occupy residues 655-684 (KKEP…EPKE) and 718-730 (KGKE…DLDK). Basic residues predominate over residues 747–759 (QKRRSSRQVKRKR). Basic and acidic residues predominate over residues 760 to 770 (YTEDLEFKISD). The span at 783–795 (SPSNTSQSEQQES) shows a compositional bias: polar residues. Chromo domains follow at residues 801–868 (PVVE…GQNK) and 883–948 (VEID…RVER). The region spanning 981 to 1155 (LFNWYNTRNC…FSLLHFLEPG (175 aa)) is the Helicase ATP-binding domain. Residue 994–1001 (DEMGLGKT) coordinates ATP. A DEAH box motif is present at residues 1106–1109 (DEAH). Positions 1295 to 1465 (LIDKLLPKLK…LSKKEIEDLL (171 aa)) constitute a Helicase C-terminal domain. Disordered stretches follow at residues 1577–1602 (FSDL…SQGY), 1836–1869 (GTDM…KDEI), and 2136–2291 (GTGN…GFYM). Over residues 1585–1597 (EEKPSTKPRRPQD) the composition is skewed to basic and acidic residues. The segment covering 1845–1856 (DGGEFDREDEDP) has biased composition (acidic residues). Positions 1857-1867 (EYKPTRTPFKD) are enriched in basic and acidic residues. Polar residues predominate over residues 2136–2145 (GTGNANTVSS). Basic and acidic residues-rich tracts occupy residues 2166 to 2207 (QEEK…KQDC) and 2218 to 2238 (CELK…SEKG). The span at 2239–2253 (SEEDEEEKLDDDDKS) shows a compositional bias: acidic residues. The stretch at 2403–2433 (RRRRRKIEIEAERAAKRRNLMEMVAQLRESQ) forms a coiled coil. Residue Ser2561 is modified to Phosphoserine. 2 disordered regions span residues 2825 to 2900 (TTGN…LPTN) and 2946 to 3011 (GSNE…ENDE). Residues 2841–2851 (GASKAEEKKNE) show a composition bias toward basic and acidic residues. Residues 2864–2877 (DTVSATDSANGSVS) are compositionally biased toward polar residues. The span at 2878–2893 (AATAATTATATTTTTT) shows a compositional bias: low complexity. Positions 2948 to 2964 (NEEKATDKTEGTAFKDE) are enriched in basic and acidic residues. 2 stretches are compositionally biased toward acidic residues: residues 2965–2974 (ENLEGSDAEE) and 2984–3011 (ILED…ENDE).

This sequence belongs to the SNF2/RAD54 helicase family. In terms of tissue distribution, expressed in the neural epithelium, otic placodes, optic placodes, branchial arches, and the olfactory placodes,.

The protein resides in the nucleus. It catalyses the reaction ATP + H2O = ADP + phosphate + H(+). ATP-dependent chromatin-remodeling factor, slides nucleosomes along DNA; nucleosome sliding requires ATP.Probable transcription regulator. Maybe involved in the in 45S precursor rRNA production. In Gallus gallus (Chicken), this protein is Chromodomain-helicase-DNA-binding protein 7 (CHD7).